The sequence spans 201 residues: Probable molybdenum cofactor guanylyltransferase (201 aa).

GTP contacts are provided by residues 20–22 (LAG), Lys-32, Asp-77, and Asp-106. Asp-106 provides a ligand contact to Mg(2+).

The protein belongs to the MobA family. Mg(2+) serves as cofactor.

Its subcellular location is the cytoplasm. It carries out the reaction Mo-molybdopterin + GTP + H(+) = Mo-molybdopterin guanine dinucleotide + diphosphate. Functionally, transfers a GMP moiety from GTP to Mo-molybdopterin (Mo-MPT) cofactor (Moco or molybdenum cofactor) to form Mo-molybdopterin guanine dinucleotide (Mo-MGD) cofactor. The protein is Probable molybdenum cofactor guanylyltransferase of Aquifex aeolicus (strain VF5).